The following is a 589-amino-acid chain: Protein drl-1 (589 aa).

The interval 1–51 (MHSEEKYLHIPNNTKYPEIIVEEEEEDPSEEERSELSETDDVATPLRPSDT) is disordered. Residues 20-41 (IVEEEEEDPSEEERSELSETDD) are compositionally biased toward acidic residues. The region spanning 97–373 (WRINEDVMKD…QNLLESHGSK (277 aa)) is the Protein kinase domain. 3 helical membrane passes run 429–449 (GFIP…VLLV), 456–476 (LCAA…IFLI), and 491–511 (GFVV…TTLC).

It belongs to the protein kinase superfamily. STE Ser/Thr protein kinase family. In terms of tissue distribution, expressed in vulval and body wall muscles, hypodermis, seam cells and tissues next to pharynx and anus.

Its subcellular location is the membrane. Negatively regulates lifespan and health span probably by participating in nutrient sensing. The chain is Protein drl-1 from Caenorhabditis elegans.